The primary structure comprises 283 residues: 4-diphosphocytidyl-2-C-methyl-D-erythritol kinase (283 aa).

The active site involves Lys10. 99–109 (PMGGGLGGGSS) is an ATP binding site. Asp141 is an active-site residue.

The protein belongs to the GHMP kinase family. IspE subfamily. As to quaternary structure, homodimer.

It carries out the reaction 4-CDP-2-C-methyl-D-erythritol + ATP = 4-CDP-2-C-methyl-D-erythritol 2-phosphate + ADP + H(+). It participates in isoprenoid biosynthesis; isopentenyl diphosphate biosynthesis via DXP pathway; isopentenyl diphosphate from 1-deoxy-D-xylulose 5-phosphate: step 3/6. Its function is as follows. Catalyzes the phosphorylation of the position 2 hydroxy group of 4-diphosphocytidyl-2C-methyl-D-erythritol. The polypeptide is 4-diphosphocytidyl-2-C-methyl-D-erythritol kinase (Escherichia coli O9:H4 (strain HS)).